The following is a 133-amino-acid chain: Ribosomal silencing factor RsfS (133 aa).

The protein belongs to the Iojap/RsfS family. Interacts with ribosomal protein uL14 (rplN).

It localises to the cytoplasm. In terms of biological role, functions as a ribosomal silencing factor. Interacts with ribosomal protein uL14 (rplN), blocking formation of intersubunit bridge B8. Prevents association of the 30S and 50S ribosomal subunits and the formation of functional ribosomes, thus repressing translation. The protein is Ribosomal silencing factor RsfS of Zymomonas mobilis subsp. mobilis (strain ATCC 31821 / ZM4 / CP4).